The primary structure comprises 632 residues: tRNA uridine 5-carboxymethylaminomethyl modification enzyme MnmG (632 aa).

Position 13 to 18 (13 to 18 (GGGHAG)) interacts with FAD. An NAD(+)-binding site is contributed by 273 to 287 (GPRYCPSIEDKIHRF).

The protein belongs to the MnmG family. In terms of assembly, homodimer. Heterotetramer of two MnmE and two MnmG subunits. Requires FAD as cofactor.

It is found in the cytoplasm. NAD-binding protein involved in the addition of a carboxymethylaminomethyl (cmnm) group at the wobble position (U34) of certain tRNAs, forming tRNA-cmnm(5)s(2)U34. The chain is tRNA uridine 5-carboxymethylaminomethyl modification enzyme MnmG from Psychrobacter arcticus (strain DSM 17307 / VKM B-2377 / 273-4).